We begin with the raw amino-acid sequence, 444 residues long: Serine--tRNA ligase (444 aa).

L-serine is bound at residue 249–251 (TAE). Residues 280–282 (RRE) and valine 296 each bind ATP. Position 303 (glutamate 303) interacts with L-serine. Position 367–370 (367–370 (EIVS)) interacts with ATP. Position 401 (threonine 401) interacts with L-serine.

The protein belongs to the class-II aminoacyl-tRNA synthetase family. Type-1 seryl-tRNA synthetase subfamily. Homodimer. The tRNA molecule binds across the dimer.

Its subcellular location is the cytoplasm. It carries out the reaction tRNA(Ser) + L-serine + ATP = L-seryl-tRNA(Ser) + AMP + diphosphate + H(+). The catalysed reaction is tRNA(Sec) + L-serine + ATP = L-seryl-tRNA(Sec) + AMP + diphosphate + H(+). It functions in the pathway aminoacyl-tRNA biosynthesis; selenocysteinyl-tRNA(Sec) biosynthesis; L-seryl-tRNA(Sec) from L-serine and tRNA(Sec): step 1/1. Catalyzes the attachment of serine to tRNA(Ser). Is also able to aminoacylate tRNA(Sec) with serine, to form the misacylated tRNA L-seryl-tRNA(Sec), which will be further converted into selenocysteinyl-tRNA(Sec). The protein is Serine--tRNA ligase of Picrophilus torridus (strain ATCC 700027 / DSM 9790 / JCM 10055 / NBRC 100828 / KAW 2/3).